A 258-amino-acid chain; its full sequence is Acyl-[acyl-carrier-protein]--UDP-N-acetylglucosamine O-acyltransferase (258 aa).

The protein belongs to the transferase hexapeptide repeat family. LpxA subfamily. In terms of assembly, homotrimer.

The protein localises to the cytoplasm. It catalyses the reaction a (3R)-hydroxyacyl-[ACP] + UDP-N-acetyl-alpha-D-glucosamine = a UDP-3-O-[(3R)-3-hydroxyacyl]-N-acetyl-alpha-D-glucosamine + holo-[ACP]. It functions in the pathway glycolipid biosynthesis; lipid IV(A) biosynthesis; lipid IV(A) from (3R)-3-hydroxytetradecanoyl-[acyl-carrier-protein] and UDP-N-acetyl-alpha-D-glucosamine: step 1/6. Functionally, involved in the biosynthesis of lipid A, a phosphorylated glycolipid that anchors the lipopolysaccharide to the outer membrane of the cell. The chain is Acyl-[acyl-carrier-protein]--UDP-N-acetylglucosamine O-acyltransferase from Pseudomonas entomophila (strain L48).